A 587-amino-acid chain; its full sequence is Probable intramembrane protease YKL100C (587 aa).

Residues 1–85 (MDKYLNSFVD…HSLVFNYATL (85 aa)) are Lumenal-facing. Residues 86 to 106 (VLIASALVVIGSFTSISSIPF) traverse the membrane as a helical segment. Over 107–156 (TALPPTREHSLFDPTDFDVDHDCHVIYRENDEDKKKKKKSKRFFDMMDEK) the chain is Cytoplasmic. Residues 157–177 (HAIILPLTSGCTLLALYFVIK) form a helical membrane-spanning segment. Residues 178–192 (KLHLNWLKYVVKILN) are Lumenal-facing. The chain crosses the membrane as a helical span at residues 193-213 (FNITLLNIPAGTFVYSYFLNS). The Cytoplasmic portion of the chain corresponds to 214–303 (LFRNLSHLAS…KSKRQISNMY (90 aa)). The helical transmembrane segment at 304 to 324 (LNSALIVSFVLSIVSTVYFYL) threads the bilayer. Over 325-328 (SPND) the chain is Lumenal. Residues 329 to 349 (WLISNAVSMNMAIWSIAQLKL) traverse the membrane as a helical segment. Topologically, residues 350–351 (KN) are cytoplasmic. The chain crosses the membrane as a helical span at residues 352–372 (LKSGALILIALFFYDICFVFG). Asp366 is a catalytic residue. Over 373 to 401 (TDVMVTVATNLDIPVKLSLPVKFNTAQNN) the chain is Lumenal. The chain crosses the membrane as a helical span at residues 402 to 422 (FNFSILGLGDIALPGMFIAMC). Asp411 is an active-site residue. Over 423-450 (YKYDIWKWHLDHDDTEFHFLNWSYVGKY) the chain is Cytoplasmic. Residues 451 to 471 (FITAMVSYVASLVSAMVSLSI) traverse the membrane as a helical segment. At 472-475 (FNTA) the chain is on the lumenal side. A helical membrane pass occupies residues 476–496 (QPALLYIVPSLLISTILVACW). The short motif at 477–479 (PAL) is the PAL element. The Cytoplasmic portion of the chain corresponds to 497 to 587 (NKDFKQFWNF…EEDLLDDESS (91 aa)). The segment at 561 to 587 (EFVQEEDLSDSSEEELSEEDLLDDESS) is disordered.

Belongs to the peptidase A22B family.

It is found in the membrane. Its subcellular location is the endoplasmic reticulum membrane. In terms of biological role, may act as intramembrane protease. The sequence is that of Probable intramembrane protease YKL100C from Saccharomyces cerevisiae (strain ATCC 204508 / S288c) (Baker's yeast).